The sequence spans 581 residues: Intermediate filament protein ifa-3 (581 aa).

Positions 1 to 33 are disordered; that stretch reads MADPDSYRSSITSRPAFNRTVTSSTQNYGTPAS. A head region spans residues 1–74; it reads MADPDSYRSS…RDDREREKKE (74 aa). Positions 7–33 are enriched in polar residues; the sequence is YRSSITSRPAFNRTVTSSTQNYGTPAS. In terms of domain architecture, IF rod spans 71–424; sequence EKKEITELND…RMLEGNSEEN (354 aa). A coil 1A region spans residues 75–106; that stretch reads ITELNDRLASYIGKVRFLAAQNRKLEADLNVL. The linker 1 stretch occupies residues 107–120; it reads QSRFGKSTGSVKIM. Residues 121-258 form a coil 1B region; it reads YEMEITTATN…RGFETELKDL (138 aa). The linker 12 stretch occupies residues 259 to 276; it reads QAQAARDTTSENREYFKN. The interval 277–424 is coil 2; that stretch reads ELMNSIRDIR…RMLEGNSEEN (148 aa). The tract at residues 425–578 is tail; that stretch reads GLRQLVEKVV…THMQRQSQQT (154 aa). The LTD domain maps to 457 to 574; sequence SRTSYQRSAK…EERATHMQRQ (118 aa).

This sequence belongs to the intermediate filament family. In terms of assembly, forms some heteromeric filaments with ifb-1. In terms of tissue distribution, expressed in the embryonic and larval hypodermis. Also expressed in the ventral nerve cord of larvae.

It is found in the cytoplasm. In terms of biological role, cytoplasmic intermediate filaments provide mechanical strength to cells. Essential protein, involved in attachment structures in epidermal cells that connect muscles to the external cuticle. Required for epidermal morphogenesis in embryos. Probable component of embryonic epidermal attachment structures. This is Intermediate filament protein ifa-3 (ifa-3) from Caenorhabditis elegans.